The chain runs to 434 residues: Glutamate-1-semialdehyde 2,1-aminomutase (434 aa).

Lys267 is modified (N6-(pyridoxal phosphate)lysine).

This sequence belongs to the class-III pyridoxal-phosphate-dependent aminotransferase family. HemL subfamily. As to quaternary structure, homodimer. Pyridoxal 5'-phosphate serves as cofactor.

It localises to the cytoplasm. The catalysed reaction is (S)-4-amino-5-oxopentanoate = 5-aminolevulinate. It functions in the pathway porphyrin-containing compound metabolism; protoporphyrin-IX biosynthesis; 5-aminolevulinate from L-glutamyl-tRNA(Glu): step 2/2. It participates in porphyrin-containing compound metabolism; chlorophyll biosynthesis. In Roseiflexus castenholzii (strain DSM 13941 / HLO8), this protein is Glutamate-1-semialdehyde 2,1-aminomutase.